The chain runs to 459 residues: Beta-glucosidase (459 aa).

The active-site Proton donor is glutamate 171. Residue glutamate 359 is the Nucleophile of the active site.

The protein belongs to the glycosyl hydrolase 1 family.

The enzyme catalyses Hydrolysis of terminal, non-reducing beta-D-glucosyl residues with release of beta-D-glucose.. The chain is Beta-glucosidase (abg) from Agrobacterium sp. (strain ATCC 21400).